The following is a 293-amino-acid chain: Elongation factor Ts (293 aa).

Residues 80–83 (TDFV) form an involved in Mg(2+) ion dislocation from EF-Tu region.

It belongs to the EF-Ts family.

Its subcellular location is the cytoplasm. Its function is as follows. Associates with the EF-Tu.GDP complex and induces the exchange of GDP to GTP. It remains bound to the aminoacyl-tRNA.EF-Tu.GTP complex up to the GTP hydrolysis stage on the ribosome. The chain is Elongation factor Ts from Staphylococcus aureus (strain Newman).